The following is a 177-amino-acid chain: Large ribosomal subunit protein uL6 (177 aa).

This sequence belongs to the universal ribosomal protein uL6 family. As to quaternary structure, part of the 50S ribosomal subunit.

This protein binds to the 23S rRNA, and is important in its secondary structure. It is located near the subunit interface in the base of the L7/L12 stalk, and near the tRNA binding site of the peptidyltransferase center. This Cupriavidus metallidurans (strain ATCC 43123 / DSM 2839 / NBRC 102507 / CH34) (Ralstonia metallidurans) protein is Large ribosomal subunit protein uL6.